Reading from the N-terminus, the 724-residue chain is Probable zinc transporter MSC2 (724 aa).

The Cytoplasmic segment spans residues 1–6 (MNLQEL). A helical membrane pass occupies residues 7–27 (LAKVPLLLSYPTIILSSNLIV). Residues 28 to 58 (PSHNDLISRAASTSAAEYADEKLIFFSTDHA) lie on the Lumenal side of the membrane. A helical transmembrane segment spans residues 59–79 (IRLIFLPTFVASSFNLFAHYF). Topologically, residues 80 to 90 (NFINYSSRRKY) are cytoplasmic. The helical transmembrane segment at 91–111 (YVLFTAIYFLSILTAIFHPIQ) threads the bilayer. Over 112–134 (STCITLLIIKLLTTADESSPKIA) the chain is Lumenal. A helical membrane pass occupies residues 135–155 (LNFKTILKTFVPFITLTLVIL). The Cytoplasmic portion of the chain corresponds to 156-174 (RWDPSFDASSGDVNKISTS). Residues 175–195 (LAAYALLILTLRYASPLILST) form a helical membrane-spanning segment. At 196–219 (LSSSIGVVSKDTSVAQHSISRNKR) the chain is on the lumenal side. The helical transmembrane segment at 220-240 (FPLILVLPIFSFVLLYLMTIV) threads the bilayer. The Cytoplasmic segment spans residues 241–244 (NKTY). Residues 245–265 (NIQLLMVFVFFGCLSIFFLSL) form a helical membrane-spanning segment. Over 266–298 (KDLFTEDGNQKKGGQEDEYCRMFDIKYMISYLW) the chain is Lumenal. The chain crosses the membrane as a helical span at residues 299–319 (LTRFTILLTGIMAIVVHFLSF). At 320–386 (NEITSSIKTD…KQMALNKDTR (67 aa)) the chain is on the cytoplasmic side. The chain crosses the membrane as a helical span at residues 387–407 (SIFSFLLLNTAFMFVQLLYSF). Over 408-417 (RSKSLGLLSD) the chain is Lumenal. A helical transmembrane segment spans residues 418–438 (SLHMALDCTSLLLGLIAGVLT). The Cytoplasmic segment spans residues 439 to 453 (KKPASDKFPFGLNYL). Residues 454–474 (GTLAGFTNGVLLLGIVCGIFV) form a helical membrane-spanning segment. The Lumenal segment spans residues 475 to 491 (EAIERIFNPIHLHATNE). A helical transmembrane segment spans residues 492-512 (LLVVATLGLLVNLVGLFAFDH). The Cytoplasmic segment spans residues 513 to 528 (GAHDHGGTDNENMKGI). Residues 529–549 (FLHILADTLGSVGVVISTLLI) form a helical membrane-spanning segment. Residues 550–563 (KLTHWPIFDPIASL) are Lumenal-facing. A helical transmembrane segment spans residues 564-584 (LIGSLILLSALPLLKSTSANI). Over 585–724 (LLRLDDKKHN…NSLPLQPIAN (140 aa)) the chain is Cytoplasmic. The segment at 614 to 653 (TPRFWPTESGSSGHSHAHTHSHAENHSHEHHHDQKNGSQE) is disordered. Positions 634–648 (SHAENHSHEHHHDQK) are enriched in basic and acidic residues.

This sequence belongs to the cation diffusion facilitator (CDF) transporter (TC 2.A.4) family. SLC30A subfamily.

It is found in the endoplasmic reticulum membrane. It localises to the nucleus membrane. Functionally, probably act as a zinc ion transporter moving zinc from the nucleus/endoplasmic reticulum to the cytoplasm. Involved in zinc ion homeostasis and cellular distribution. This Saccharomyces cerevisiae (strain ATCC 204508 / S288c) (Baker's yeast) protein is Probable zinc transporter MSC2 (MSC2).